Here is a 344-residue protein sequence, read N- to C-terminus: Centromere protein N (344 aa).

It belongs to the CENP-N/CHL4 family.

Its subcellular location is the nucleus. The protein resides in the chromosome. It is found in the centromere. Functionally, probable component of a centromeric complex involved in assembly of kinetochore proteins, mitotic progression and chromosome segregation. This chain is Centromere protein N (CENPN), found in Gallus gallus (Chicken).